The primary structure comprises 386 residues: Citrate synthase (386 aa).

Catalysis depends on residues His266 and Asp322.

This sequence belongs to the citrate synthase family.

The enzyme catalyses oxaloacetate + acetyl-CoA + H2O = citrate + CoA + H(+). It participates in carbohydrate metabolism; tricarboxylic acid cycle; isocitrate from oxaloacetate: step 1/2. In Acidithiobacillus ferridurans, this protein is Citrate synthase (gltA).